Here is a 136-residue protein sequence, read N- to C-terminus: Small ribosomal subunit protein uS9 (136 aa).

The protein belongs to the universal ribosomal protein uS9 family.

In Synechococcus sp. (strain JA-2-3B'a(2-13)) (Cyanobacteria bacterium Yellowstone B-Prime), this protein is Small ribosomal subunit protein uS9.